Consider the following 215-residue polypeptide: LexA repressor (215 aa).

A DNA-binding region (H-T-H motif) is located at residues 29 to 49; it reads VREICSAVGFKSTSTVHSYLQ. Catalysis depends on for autocatalytic cleavage activity residues Ser-138 and Lys-175.

Belongs to the peptidase S24 family. In terms of assembly, homodimer.

It carries out the reaction Hydrolysis of Ala-|-Gly bond in repressor LexA.. In terms of biological role, represses a number of genes involved in the response to DNA damage (SOS response), including recA and lexA. In the presence of single-stranded DNA, RecA interacts with LexA causing an autocatalytic cleavage which disrupts the DNA-binding part of LexA, leading to derepression of the SOS regulon and eventually DNA repair. In Ruminiclostridium cellulolyticum (strain ATCC 35319 / DSM 5812 / JCM 6584 / H10) (Clostridium cellulolyticum), this protein is LexA repressor.